A 26-amino-acid polypeptide reads, in one-letter code: Citropin-2.1.3 (26 aa).

As to expression, expressed by the dorsal and submental skin glands.

The protein resides in the secreted. The polypeptide is Citropin-2.1.3 (Ranoidea citropa (Australian Blue Mountains tree frog)).